A 350-amino-acid polypeptide reads, in one-letter code: ATPase GET3 (350 aa).

Position 26-33 (26-33 (KGGVGKTT)) interacts with ATP. Asp-57 is an active-site residue. Glu-243 and Asn-270 together coordinate ATP. Residues Cys-282 and Cys-285 each contribute to the Zn(2+) site.

The protein belongs to the arsA ATPase family. In terms of assembly, homodimer. Component of the Golgi to ER traffic (GET) complex, which is composed of GET1, GET2 and GET3. Within the complex, GET1 and GET2 form a heterotetramer which is stabilized by phosphatidylinositol binding and which binds to the GET3 homodimer. Interacts with the chloride channel protein GEF1.

The protein resides in the cytoplasm. The protein localises to the endoplasmic reticulum. It localises to the golgi apparatus. ATPase required for the post-translational delivery of tail-anchored (TA) proteins to the endoplasmic reticulum. Recognizes and selectively binds the transmembrane domain of TA proteins in the cytosol. This complex then targets to the endoplasmic reticulum by membrane-bound receptors GET1 and GET2, where the tail-anchored protein is released for insertion. This process is regulated by ATP binding and hydrolysis. ATP binding drives the homodimer towards the closed dimer state, facilitating recognition of newly synthesized TA membrane proteins. ATP hydrolysis is required for insertion. Subsequently, the homodimer reverts towards the open dimer state, lowering its affinity for the GET1-GET2 receptor, and returning it to the cytosol to initiate a new round of targeting. Cooperates with the HDEL receptor ERD2 to mediate the ATP-dependent retrieval of resident ER proteins that contain a C-terminal H-D-E-L retention signal from the Golgi to the ER. Involved in low-level resistance to the oxyanions arsenite and arsenate, and in heat tolerance. This Candida albicans (strain SC5314 / ATCC MYA-2876) (Yeast) protein is ATPase GET3.